A 147-amino-acid polypeptide reads, in one-letter code: Effector TSP1 (147 aa).

The signal sequence occupies residues 1–19; that stretch reads MQITKTLVATLFAASTAFA. Disulfide bonds link Cys-44/Cys-51 and Cys-67/Cys-87.

Homodimer.

The protein localises to the secreted. Stimulates salicylic acid signaling in host plant roots. The polypeptide is Effector TSP1 (Hypocrea virens (strain Gv29-8 / FGSC 10586) (Gliocladium virens)).